The sequence spans 96 residues: Protein RnfH (96 aa).

The protein belongs to the UPF0125 (RnfH) family.

This is Protein RnfH from Salmonella agona (strain SL483).